Reading from the N-terminus, the 229-residue chain is 5'-methylthioadenosine/S-adenosylhomocysteine nucleosidase (229 aa).

Glutamate 12 functions as the Proton acceptor in the catalytic mechanism. Substrate-binding positions include glycine 78, isoleucine 152, and 173–174 (ME). Aspartate 197 functions as the Proton donor in the catalytic mechanism.

It belongs to the PNP/UDP phosphorylase family. MtnN subfamily.

The catalysed reaction is S-adenosyl-L-homocysteine + H2O = S-(5-deoxy-D-ribos-5-yl)-L-homocysteine + adenine. The enzyme catalyses S-methyl-5'-thioadenosine + H2O = 5-(methylsulfanyl)-D-ribose + adenine. It carries out the reaction 5'-deoxyadenosine + H2O = 5-deoxy-D-ribose + adenine. Its pathway is amino-acid biosynthesis; L-methionine biosynthesis via salvage pathway; S-methyl-5-thio-alpha-D-ribose 1-phosphate from S-methyl-5'-thioadenosine (hydrolase route): step 1/2. In terms of biological role, catalyzes the irreversible cleavage of the glycosidic bond in both 5'-methylthioadenosine (MTA) and S-adenosylhomocysteine (SAH/AdoHcy) to adenine and the corresponding thioribose, 5'-methylthioribose and S-ribosylhomocysteine, respectively. Also cleaves 5'-deoxyadenosine, a toxic by-product of radical S-adenosylmethionine (SAM) enzymes, into 5-deoxyribose and adenine. The protein is 5'-methylthioadenosine/S-adenosylhomocysteine nucleosidase of Pasteurella multocida (strain Pm70).